A 367-amino-acid polypeptide reads, in one-letter code: Phosphoribosylaminoimidazole-succinocarboxamide synthase (367 aa).

The protein belongs to the SAICAR synthetase family.

The enzyme catalyses 5-amino-1-(5-phospho-D-ribosyl)imidazole-4-carboxylate + L-aspartate + ATP = (2S)-2-[5-amino-1-(5-phospho-beta-D-ribosyl)imidazole-4-carboxamido]succinate + ADP + phosphate + 2 H(+). Its pathway is purine metabolism; IMP biosynthesis via de novo pathway; 5-amino-1-(5-phospho-D-ribosyl)imidazole-4-carboxamide from 5-amino-1-(5-phospho-D-ribosyl)imidazole-4-carboxylate: step 1/2. The sequence is that of Phosphoribosylaminoimidazole-succinocarboxamide synthase from Vibrio campbellii (strain ATCC BAA-1116).